Reading from the N-terminus, the 1461-residue chain is Phospholipid-transporting ATPase VB (1461 aa).

Residues 1 to 82 (MALSVDSSWH…TTKYTLFTFL (82 aa)) are Cytoplasmic-facing. The chain crosses the membrane as a helical span at residues 83–104 (PRNLFEQFHRWANLYFLFLVIL). Over 105-110 (NWMPSM) the chain is Exoplasmic loop. A helical transmembrane segment spans residues 111 to 132 (EVFHREITMLPLAIVLFVIMIK). At 133–316 (DGMEDFKRHR…SKIERRMNID (184 aa)) the chain is on the cytoplasmic side. The chain crosses the membrane as a helical span at residues 317 to 338 (IFFCIGILILMCLIGAVGHSIW). Over 339-368 (NGTFEEHPPFDVPDANGSFLPSALGGFYMF) the chain is Exoplasmic loop. A helical membrane pass occupies residues 369-390 (LTMIILLQVLIPISLYVSIELV). The Cytoplasmic portion of the chain corresponds to 391–1111 (KLGQVFFLSN…GHWCYSRLAR (721 aa)). Asp-433 serves as the catalytic 4-aspartylphosphate intermediate. ATP contacts are provided by Asp-433, Lys-434, and Thr-435. Residue Asp-433 coordinates Mg(2+). Residue Thr-435 participates in Mg(2+) binding. Polar residues-rich tracts occupy residues 496–511 (MRSQ…SQSA) and 530–539 (SQPPVAFSSS). Disordered regions lie at residues 496–541 (MRSQ…SSIE) and 640–687 (TAPS…MWDQ). Residues Glu-724, Phe-766, Lys-790, Arg-835, Thr-915, Gly-916, Asp-917, Arg-1029, and Lys-1035 each coordinate ATP. Position 1055 (Asp-1055) interacts with Mg(2+). Residues Asn-1058 and Asp-1059 each coordinate ATP. Mg(2+) is bound at residue Asp-1059. A helical membrane pass occupies residues 1112–1132 (MVVYYLYKNVCYVNLLFWYQF). Residues 1133 to 1144 (FCGFSSSTMIDY) are Exoplasmic loop-facing. A helical membrane pass occupies residues 1145-1164 (WQMIFFNLFFTSLPPLVFGV). Residues 1165-1194 (LDKDISAETLLALPELYKSGQNSECYNLST) are Cytoplasmic-facing. The chain crosses the membrane as a helical span at residues 1195–1216 (FWISMVDAFYQSLICFFIPYLA). Residues 1217-1223 (YKGSDID) are Exoplasmic loop-facing. A helical membrane pass occupies residues 1224-1246 (VFTFGTPINTISLTTILLHQAME). At 1247–1252 (MKTWTI) the chain is on the cytoplasmic side. A helical transmembrane segment spans residues 1253–1273 (FHGVVLLGSFLMYFLVSLLYN). Residues 1274 to 1291 (ATCVICNSPTNPYWVMEG) lie on the Exoplasmic loop side of the membrane. Residues 1292–1316 (QLSNPTFYLVCFLTPVVALLPRYFF) traverse the membrane as a helical segment. At 1317-1461 (LSLQGTCGKS…HRRSQSSLTI (145 aa)) the chain is on the cytoplasmic side. A disordered region spans residues 1346–1397 (IQSWRSRQRPAPVPEVARPTHHPVSSITGQDFSASTPKSSNPPKRKHVEESV). Residues 1368–1387 (PVSSITGQDFSASTPKSSNP) are compositionally biased toward polar residues.

The protein belongs to the cation transport ATPase (P-type) (TC 3.A.3) family. Type IV subfamily. In terms of assembly, component of a P4-ATPase flippase complex which consists of a catalytic alpha subunit ATP10B and an accessory beta subunit TMEM30A. The cofactor is Mg(2+). Post-translationally, autophosphorylated at the conserved aspartate of the P-type ATPase signature sequence. As to expression, expressed in predominantly in brain structures including medulla oblongata, substantia nigra and basal ganglia. Expressed in the gastrointestinal system with highest levels in the small intestine and colon. Also expressed at low levels in testis and thymus.

The protein resides in the late endosome membrane. It is found in the lysosome membrane. It localises to the endoplasmic reticulum membrane. The enzyme catalyses ATP + H2O + phospholipidSide 1 = ADP + phosphate + phospholipidSide 2.. The catalysed reaction is a beta-D-glucosyl-(1&lt;-&gt;1')-N-acylsphing-4-enine(out) + ATP + H2O = a beta-D-glucosyl-(1&lt;-&gt;1')-N-acylsphing-4-enine(in) + ADP + phosphate + H(+). Its function is as follows. Catalytic component of a P4-ATPase flippase complex, which catalyzes the hydrolysis of ATP coupled to the transport of glucosylceramide (GlcCer) from the outer to the inner leaflet of lysosome membranes. Plays an important role in the maintenance of lysosome membrane integrity and function in cortical neurons. The polypeptide is Phospholipid-transporting ATPase VB (Homo sapiens (Human)).